The chain runs to 806 residues: Phenylalanine--tRNA ligase beta subunit (806 aa).

One can recognise a tRNA-binding domain in the interval 40–155 (NKGVKGVVVG…SDAEVGADAL (116 aa)). Positions 409 to 484 (VQERTVSVTA…RLYGYDHIPV (76 aa)) constitute a B5 domain. Mg(2+) is bound by residues Asp-462, Asp-468, Glu-471, and Glu-472. An FDX-ACB domain is found at 712-805 (PRFPSMTRDM…VEEKFGAELR (94 aa)).

This sequence belongs to the phenylalanyl-tRNA synthetase beta subunit family. Type 1 subfamily. As to quaternary structure, tetramer of two alpha and two beta subunits. It depends on Mg(2+) as a cofactor.

It localises to the cytoplasm. The enzyme catalyses tRNA(Phe) + L-phenylalanine + ATP = L-phenylalanyl-tRNA(Phe) + AMP + diphosphate + H(+). In Bacillus cereus (strain ZK / E33L), this protein is Phenylalanine--tRNA ligase beta subunit.